A 237-amino-acid polypeptide reads, in one-letter code: Purine nucleoside phosphorylase DeoD-type (237 aa).

Residue histidine 4 participates in a purine D-ribonucleoside binding. Phosphate-binding positions include glycine 20, arginine 24, arginine 43, and arginine 87 to threonine 90. A purine D-ribonucleoside is bound by residues glutamate 179–glutamate 181 and serine 203–aspartate 204. The active-site Proton donor is aspartate 204.

It belongs to the PNP/UDP phosphorylase family. In terms of assembly, homohexamer; trimer of homodimers.

It carries out the reaction a purine D-ribonucleoside + phosphate = a purine nucleobase + alpha-D-ribose 1-phosphate. It catalyses the reaction a purine 2'-deoxy-D-ribonucleoside + phosphate = a purine nucleobase + 2-deoxy-alpha-D-ribose 1-phosphate. Functionally, catalyzes the reversible phosphorolytic breakdown of the N-glycosidic bond in the beta-(deoxy)ribonucleoside molecules, with the formation of the corresponding free purine bases and pentose-1-phosphate. In Streptococcus gordonii (strain Challis / ATCC 35105 / BCRC 15272 / CH1 / DL1 / V288), this protein is Purine nucleoside phosphorylase DeoD-type.